A 129-amino-acid polypeptide reads, in one-letter code: MWGIQHFGDFMEKWELKKLAVCFNCKKEADQIIEIYTNQAFVKCSNCGATRYYILRRVGIEDESIIEDEKNKKHKYEPWFLEKTAVCFNCKKEATQDIAITETKMIVRCRNCGFTRVYQFHILDIPENK.

This is an uncharacterized protein from Methanocaldococcus jannaschii (strain ATCC 43067 / DSM 2661 / JAL-1 / JCM 10045 / NBRC 100440) (Methanococcus jannaschii).